The primary structure comprises 87 residues: Small ribosomal subunit protein eS21B (87 aa).

N-acetylmethionine is present on methionine 1.

This sequence belongs to the eukaryotic ribosomal protein eS21 family. Component of the small ribosomal subunit (SSU). Mature yeast ribosomes consist of a small (40S) and a large (60S) subunit. The 40S small subunit contains 1 molecule of ribosomal RNA (18S rRNA) and 33 different proteins (encoded by 57 genes). The large 60S subunit contains 3 rRNA molecules (25S, 5.8S and 5S rRNA) and 46 different proteins (encoded by 81 genes). Post-translationally, N-terminally acetylated by acetyltransferase NatB.

The protein localises to the cytoplasm. In terms of biological role, component of the ribosome, a large ribonucleoprotein complex responsible for the synthesis of proteins in the cell. The small ribosomal subunit (SSU) binds messenger RNAs (mRNAs) and translates the encoded message by selecting cognate aminoacyl-transfer RNA (tRNA) molecules. The large subunit (LSU) contains the ribosomal catalytic site termed the peptidyl transferase center (PTC), which catalyzes the formation of peptide bonds, thereby polymerizing the amino acids delivered by tRNAs into a polypeptide chain. The nascent polypeptides leave the ribosome through a tunnel in the LSU and interact with protein factors that function in enzymatic processing, targeting, and the membrane insertion of nascent chains at the exit of the ribosomal tunnel. eS21 is required for the processing of the 20S rRNA-precursor to mature 18S rRNA in a late step of the maturation of 40S ribosomal subunits. Has a physiological role leading to 18S rRNA stability. This Saccharomyces cerevisiae (strain ATCC 204508 / S288c) (Baker's yeast) protein is Small ribosomal subunit protein eS21B.